Consider the following 474-residue polypeptide: tRNA-2-methylthio-N(6)-dimethylallyladenosine synthase (474 aa).

Positions 3–120 constitute an MTTase N-terminal domain; the sequence is KKLHIKTWGC…LPEMINSVRG (118 aa). [4Fe-4S] cluster-binding residues include Cys-12, Cys-49, Cys-83, Cys-157, Cys-161, and Cys-164. One can recognise a Radical SAM core domain in the interval 143 to 375; that stretch reads RAEGPTAFVS…QERINQQAMA (233 aa). One can recognise a TRAM domain in the interval 378–441; the sequence is RRMLGTTQRI…PNSLRGKVVR (64 aa).

This sequence belongs to the methylthiotransferase family. MiaB subfamily. Monomer. It depends on [4Fe-4S] cluster as a cofactor.

The protein resides in the cytoplasm. The catalysed reaction is N(6)-dimethylallyladenosine(37) in tRNA + (sulfur carrier)-SH + AH2 + 2 S-adenosyl-L-methionine = 2-methylsulfanyl-N(6)-dimethylallyladenosine(37) in tRNA + (sulfur carrier)-H + 5'-deoxyadenosine + L-methionine + A + S-adenosyl-L-homocysteine + 2 H(+). Catalyzes the methylthiolation of N6-(dimethylallyl)adenosine (i(6)A), leading to the formation of 2-methylthio-N6-(dimethylallyl)adenosine (ms(2)i(6)A) at position 37 in tRNAs that read codons beginning with uridine. This chain is tRNA-2-methylthio-N(6)-dimethylallyladenosine synthase, found in Escherichia coli (strain SE11).